A 325-amino-acid polypeptide reads, in one-letter code: Mitochondrial amidoxime-reducing component 1 (325 aa).

Topologically, residues 1-16 are mitochondrial matrix; the sequence is MDLKEAFATIFDQNRK. A helical; Signal-anchor for type II membrane protein membrane pass occupies residues 17–36; it reads VALYAAGTTVAVLGLGLVFK. The Cytoplasmic segment spans residues 37 to 325; sequence YMRREEKLTR…VGEPVYKITY (289 aa). 3 residues coordinate Mo-molybdopterin: Lys59, Ser60, and Arg84. Positions 85-175 are MOSC N-terminal region; that stretch reads HWLVITEDGH…ADKPVRLVHY (91 aa). An MOSC domain is found at 179–323; that stretch reads LKPQRPHEKE…LHVGEPVYKI (145 aa). Positions 230, 264, 265, and 305 each coordinate Mo-molybdopterin.

Mo-molybdopterin serves as cofactor.

The protein resides in the mitochondrion outer membrane. It is found in the membrane. The catalysed reaction is N(omega)-hydroxy-L-arginine + 2 Fe(II)-[cytochrome b5] + 2 H(+) = L-arginine + 2 Fe(III)-[cytochrome b5] + H2O. Its function is as follows. Catalyzes the reduction of N-oxygenated molecules, acting as a counterpart of cytochrome P450 and flavin-containing monooxygenases in metabolic cycles. As a component of prodrug-converting system, reduces a multitude of N-hydroxylated prodrugs particularly amidoximes, leading to increased drug bioavailability. May be involved in mitochondrial N(omega)-hydroxy-L-arginine (NOHA) reduction, regulating endogenous nitric oxide levels and biosynthesis. Postulated to cleave the N-OH bond of N-hydroxylated substrates in concert with electron transfer from NADH to cytochrome b5 reductase then to cytochrome b5, the ultimate electron donor that primes the active site for substrate reduction. The chain is Mitochondrial amidoxime-reducing component 1 (mtarc1) from Danio rerio (Zebrafish).